We begin with the raw amino-acid sequence, 485 residues long: E3 ubiquitin-protein ligase TRIM34A (485 aa).

The RING-type zinc finger occupies 15 to 59; that stretch reads CPVCQELLTKALSLGCGHRVCQACLITKKNAVINPREKSSCPVCG. The B box-type zinc finger occupies 91–132; sequence TKRDLCVHHGEKLLLFCKEDKKAICWVCERSQEHRGHHTFLW. The Zn(2+) site is built by C96, H99, C118, and H124. The stretch at 136-170 forms a coiled coil; the sequence is VRECQENLQKALTRLRKEQEKVETLEADIKEDRLS. Residues 282–485 form the B30.2/SPRY domain; that stretch reads LSGMLQKFRE…APMTLCPLNS (204 aa).

This sequence belongs to the TRIM/RBCC family. As to quaternary structure, homotrimer. Interacts (via B-box and SPRY domain) with TRIM5.

It localises to the cytoplasm. The protein localises to the mitochondrion. The catalysed reaction is S-ubiquitinyl-[E2 ubiquitin-conjugating enzyme]-L-cysteine + [acceptor protein]-L-lysine = [E2 ubiquitin-conjugating enzyme]-L-cysteine + N(6)-ubiquitinyl-[acceptor protein]-L-lysine.. It participates in protein modification; protein ubiquitination. Functionally, functions as antiviral protein and contributes to the defense against retroviral infections. Acts as a capsid-specific restriction factor with the help of TRIM5 and prevents infection from non-host-adapted retroviruses. During influenza A virus infection, promotes programmed cell death by targeting ZBP1 for 'Lys-63'-linked polyubiquitination. In turn, promotes ZBP1 recruitment of RIPK3 to mediate virus-induced programmed necrosis. Negatively regulates the function of mitochondria by enhancing mitochondrial depolarization leading to cytochrome c release and mitochondria-dependent apoptosis. Also promotes the formation of multinucleated giant cells by means of cell fusion and phagocytosis in epithelial cells. Plays an essential role in sustaining the integrity of the inner mucus layer in the colon by controlling the exocytosis of the major component of colonic mucus MUC2 from colonic goblet cells. This Mus musculus (Mouse) protein is E3 ubiquitin-protein ligase TRIM34A.